Reading from the N-terminus, the 429-residue chain is Bifunctional protein GlmU (429 aa).

Residues 1–223 are pyrophosphorylase; the sequence is MKISVLILAA…EQDFMGVNDK (223 aa). Residues 8 to 11, K22, Q74, and 81 to 82 contribute to the UDP-N-acetyl-alpha-D-glucosamine site; these read LAAG and GT. D102 contacts Mg(2+). UDP-N-acetyl-alpha-D-glucosamine-binding residues include G135, E149, N164, and N221. N221 is a binding site for Mg(2+). Residues 224–244 form a linker region; that stretch reads IELCLAQDLMQEAIKKEWMKQ. The tract at residues 245–429 is N-acetyltransferase; it reads GVIFHMPATT…KDYFYTKFKK (185 aa). The UDP-N-acetyl-alpha-D-glucosamine site is built by R308 and K325. H336 serves as the catalytic Proton acceptor. 2 residues coordinate UDP-N-acetyl-alpha-D-glucosamine: Y339 and N350. Acetyl-CoA is bound by residues 359-360, S378, A396, and R413; that span reads NY.

It in the N-terminal section; belongs to the N-acetylglucosamine-1-phosphate uridyltransferase family. In the C-terminal section; belongs to the transferase hexapeptide repeat family. Homotrimer. Mg(2+) is required as a cofactor.

The protein localises to the cytoplasm. It carries out the reaction alpha-D-glucosamine 1-phosphate + acetyl-CoA = N-acetyl-alpha-D-glucosamine 1-phosphate + CoA + H(+). It catalyses the reaction N-acetyl-alpha-D-glucosamine 1-phosphate + UTP + H(+) = UDP-N-acetyl-alpha-D-glucosamine + diphosphate. It participates in nucleotide-sugar biosynthesis; UDP-N-acetyl-alpha-D-glucosamine biosynthesis; N-acetyl-alpha-D-glucosamine 1-phosphate from alpha-D-glucosamine 6-phosphate (route II): step 2/2. It functions in the pathway nucleotide-sugar biosynthesis; UDP-N-acetyl-alpha-D-glucosamine biosynthesis; UDP-N-acetyl-alpha-D-glucosamine from N-acetyl-alpha-D-glucosamine 1-phosphate: step 1/1. Its pathway is bacterial outer membrane biogenesis; LPS lipid A biosynthesis. Its function is as follows. Catalyzes the last two sequential reactions in the de novo biosynthetic pathway for UDP-N-acetylglucosamine (UDP-GlcNAc). The C-terminal domain catalyzes the transfer of acetyl group from acetyl coenzyme A to glucosamine-1-phosphate (GlcN-1-P) to produce N-acetylglucosamine-1-phosphate (GlcNAc-1-P), which is converted into UDP-GlcNAc by the transfer of uridine 5-monophosphate (from uridine 5-triphosphate), a reaction catalyzed by the N-terminal domain. The protein is Bifunctional protein GlmU of Campylobacter lari (strain RM2100 / D67 / ATCC BAA-1060).